A 37-amino-acid chain; its full sequence is Large ribosomal subunit protein bL36c (37 aa).

It belongs to the bacterial ribosomal protein bL36 family.

The protein resides in the plastid. It localises to the chloroplast. The sequence is that of Large ribosomal subunit protein bL36c (rpl36) from Cyanidium caldarium (Red alga).